A 368-amino-acid polypeptide reads, in one-letter code: UDP-N-acetylglucosamine--N-acetylmuramyl-(pentapeptide) pyrophosphoryl-undecaprenol N-acetylglucosamine transferase (368 aa).

UDP-N-acetyl-alpha-D-glucosamine contacts are provided by residues 14–16 (TGG), N125, R168, S196, and Q297.

It belongs to the glycosyltransferase 28 family. MurG subfamily.

It is found in the cell inner membrane. The enzyme catalyses di-trans,octa-cis-undecaprenyl diphospho-N-acetyl-alpha-D-muramoyl-L-alanyl-D-glutamyl-meso-2,6-diaminopimeloyl-D-alanyl-D-alanine + UDP-N-acetyl-alpha-D-glucosamine = di-trans,octa-cis-undecaprenyl diphospho-[N-acetyl-alpha-D-glucosaminyl-(1-&gt;4)]-N-acetyl-alpha-D-muramoyl-L-alanyl-D-glutamyl-meso-2,6-diaminopimeloyl-D-alanyl-D-alanine + UDP + H(+). It functions in the pathway cell wall biogenesis; peptidoglycan biosynthesis. Its function is as follows. Cell wall formation. Catalyzes the transfer of a GlcNAc subunit on undecaprenyl-pyrophosphoryl-MurNAc-pentapeptide (lipid intermediate I) to form undecaprenyl-pyrophosphoryl-MurNAc-(pentapeptide)GlcNAc (lipid intermediate II). The chain is UDP-N-acetylglucosamine--N-acetylmuramyl-(pentapeptide) pyrophosphoryl-undecaprenol N-acetylglucosamine transferase from Nitrobacter winogradskyi (strain ATCC 25391 / DSM 10237 / CIP 104748 / NCIMB 11846 / Nb-255).